A 425-amino-acid polypeptide reads, in one-letter code: Serine--tRNA ligase (425 aa).

L-serine is bound at residue 230 to 232 (TAE). An ATP-binding site is contributed by 261–263 (RSE). Glu284 is a binding site for L-serine. An ATP-binding site is contributed by 348–351 (EISS). Residue Ser384 participates in L-serine binding.

Belongs to the class-II aminoacyl-tRNA synthetase family. Type-1 seryl-tRNA synthetase subfamily. As to quaternary structure, homodimer. The tRNA molecule binds across the dimer.

It is found in the cytoplasm. The catalysed reaction is tRNA(Ser) + L-serine + ATP = L-seryl-tRNA(Ser) + AMP + diphosphate + H(+). It catalyses the reaction tRNA(Sec) + L-serine + ATP = L-seryl-tRNA(Sec) + AMP + diphosphate + H(+). The protein operates within aminoacyl-tRNA biosynthesis; selenocysteinyl-tRNA(Sec) biosynthesis; L-seryl-tRNA(Sec) from L-serine and tRNA(Sec): step 1/1. Catalyzes the attachment of serine to tRNA(Ser). Is also able to aminoacylate tRNA(Sec) with serine, to form the misacylated tRNA L-seryl-tRNA(Sec), which will be further converted into selenocysteinyl-tRNA(Sec). In Streptococcus pyogenes serotype M1, this protein is Serine--tRNA ligase.